Here is a 393-residue protein sequence, read N- to C-terminus: Formate-dependent phosphoribosylglycinamide formyltransferase (393 aa).

N(1)-(5-phospho-beta-D-ribosyl)glycinamide is bound by residues 22 to 23 (EL) and glutamate 82. ATP is bound by residues arginine 114, lysine 155, 160 to 165 (SSGKGQ), 195 to 198 (EGFI), and glutamate 203. Residues 119–308 (RLAAEELKLP…QFALHARAIL (190 aa)) enclose the ATP-grasp domain. Mg(2+) contacts are provided by glutamate 267 and glutamate 279. N(1)-(5-phospho-beta-D-ribosyl)glycinamide is bound by residues aspartate 286, lysine 356, and 363–364 (RR).

The protein belongs to the PurK/PurT family. Homodimer.

It catalyses the reaction N(1)-(5-phospho-beta-D-ribosyl)glycinamide + formate + ATP = N(2)-formyl-N(1)-(5-phospho-beta-D-ribosyl)glycinamide + ADP + phosphate + H(+). It participates in purine metabolism; IMP biosynthesis via de novo pathway; N(2)-formyl-N(1)-(5-phospho-D-ribosyl)glycinamide from N(1)-(5-phospho-D-ribosyl)glycinamide (formate route): step 1/1. Its function is as follows. Involved in the de novo purine biosynthesis. Catalyzes the transfer of formate to 5-phospho-ribosyl-glycinamide (GAR), producing 5-phospho-ribosyl-N-formylglycinamide (FGAR). Formate is provided by PurU via hydrolysis of 10-formyl-tetrahydrofolate. The polypeptide is Formate-dependent phosphoribosylglycinamide formyltransferase (Pseudomonas syringae pv. syringae (strain B728a)).